A 260-amino-acid chain; its full sequence is Acetylglutamate kinase (260 aa).

Substrate-binding positions include 41-42, Arg-63, and Asn-156; that span reads GG.

It belongs to the acetylglutamate kinase family. ArgB subfamily.

The protein localises to the cytoplasm. The catalysed reaction is N-acetyl-L-glutamate + ATP = N-acetyl-L-glutamyl 5-phosphate + ADP. The protein operates within amino-acid biosynthesis; L-arginine biosynthesis; N(2)-acetyl-L-ornithine from L-glutamate: step 2/4. In terms of biological role, catalyzes the ATP-dependent phosphorylation of N-acetyl-L-glutamate. The polypeptide is Acetylglutamate kinase (Halalkalibacterium halodurans (strain ATCC BAA-125 / DSM 18197 / FERM 7344 / JCM 9153 / C-125) (Bacillus halodurans)).